A 223-amino-acid polypeptide reads, in one-letter code: MKAMILAAGKGERMRPLTLHTPKPLVPVAGQPLIEYHLRALAAAGVTEVVINHAWLGQQIEDHLGDGSRFGLSIRYSPEGEPLETGGGIFKALPLLGDAPFLLVNGDVWTDYDFARLQAPLQGLAHLVLVDNPGHHGRGDFRLVGEQVVDGDDAPGTLTFSGISVLHPALFEGCQAGAFKLAPLLRQAMAAGKVSGEHYRGHWVDVGTLERLAEAESLIGERA.

UTP-binding positions include 11 to 13 (GER) and K23. A substrate-binding site is contributed by N105. D107 contributes to the Mg(2+) binding site. Substrate-binding residues include D140 and D205. Mg(2+) is bound at residue D205.

Belongs to the nucleotidyltransferase MurU family. Monomer. Requires Mg(2+) as cofactor.

The catalysed reaction is N-acetyl-alpha-D-muramate 1-phosphate + UDP + H(+) = UDP-N-acetyl-alpha-D-muramate + phosphate. Its pathway is cell wall biogenesis; peptidoglycan recycling. Is completely inhibited by EDTA in vitro. In terms of biological role, catalyzes the formation of UDP-N-acetylmuramate (UDP-MurNAc), a crucial precursor of the bacterial peptidoglycan cell wall, from UTP and MurNAc-alpha-1P. Is involved in peptidoglycan recycling as part of a cell wall recycling pathway that bypasses de novo biosynthesis of the peptidoglycan precursor UDP-MurNAc. Plays a role in intrinsic resistance to fosfomycin, which targets the de novo synthesis of UDP-MurNAc. Is not able to use GlcNAc-alpha-1P and GalNAc-alpha-1P as substrates. Cannot accept other nucleotide triphosphates (ATP, CTP, TTP, or GTP) than UTP. The chain is N-acetylmuramate alpha-1-phosphate uridylyltransferase from Pseudomonas putida (strain ATCC 47054 / DSM 6125 / CFBP 8728 / NCIMB 11950 / KT2440).